The chain runs to 507 residues: MHKKVLLAILDGYGISNAIYGNAVQNANTPMLDELINSYPCVLLDASGEAVGLPMGQIGNSEVGHLNIGAGRVVYTGLSLINQHIKDRSFFANKAFLKTIEHVEKNHSKIHLIGLFSNGGVHSHNEHLLALIELFSKHAKVVLHLFGDGRDVAPCSLKQDLEKLMIFLKNYPNVVIGTIGGRYYGMDRDQRWDREMIAYKALLGVSKNKFNDPIGYIETQYQNQITDEFIYPAINANLNSDQFALNNNDGVIFFNFRPDRARQMSHLIFNSNYYNYQPELKRKENLFFVTMMNYEGIVPSEFAFPPQTIKNSLGEVIANNNLKQLRIAETEKYAHVTFFFDGGFEVNLSNETKTLIPSLKVATYDLAPEMSCKAITDALLEKLNNFDFTVLNFANPDMVGHTGNYQACIKALEALDVQIKRIVDFCKANQITMFLTADHGNAEVMIDNNNNPVTKHTINPVPFVCTDKNVNFNQTGILANIAPTILEYLNLSKPKEMTAKSLLKNNN.

Aspartate 11 and serine 61 together coordinate Mn(2+). Residue serine 61 is the Phosphoserine intermediate of the active site. Substrate-binding positions include histidine 122, 150–151 (RD), arginine 182, arginine 188, 257–260 (RPDR), and lysine 332. Aspartate 397, histidine 401, aspartate 438, histidine 439, and histidine 456 together coordinate Mn(2+).

This sequence belongs to the BPG-independent phosphoglycerate mutase family. In terms of assembly, monomer. It depends on Mn(2+) as a cofactor.

It carries out the reaction (2R)-2-phosphoglycerate = (2R)-3-phosphoglycerate. It participates in carbohydrate degradation; glycolysis; pyruvate from D-glyceraldehyde 3-phosphate: step 3/5. In terms of biological role, catalyzes the interconversion of 2-phosphoglycerate and 3-phosphoglycerate. The protein is 2,3-bisphosphoglycerate-independent phosphoglycerate mutase of Mycoplasma genitalium (strain ATCC 33530 / DSM 19775 / NCTC 10195 / G37) (Mycoplasmoides genitalium).